A 71-amino-acid polypeptide reads, in one-letter code: Disintegrin halysin (71 aa).

Positions 1-71 (EAGEECDCGS…ISAGCPRNPF (71 aa)) constitute a Disintegrin domain. 6 cysteine pairs are disulfide-bonded: Cys6-Cys21, Cys8-Cys16, Cys15-Cys38, Cys29-Cys35, Cys34-Cys59, and Cys47-Cys66. Residues 51 to 53 (RGD) carry the Cell attachment site motif.

This sequence belongs to the venom metalloproteinase (M12B) family. P-II subfamily. P-IIa sub-subfamily. In terms of assembly, monomer. As to expression, expressed by the venom gland.

The protein localises to the secreted. Functionally, inhibits fibrinogen interaction with platelets. Acts by binding to alpha-IIb/beta-3 (ITGA2B/ITGB3) on the platelet surface and inhibits aggregation induced by ADP, thrombin, platelet-activating factor and collagen. The chain is Disintegrin halysin from Gloydius blomhoffii (Mamushi).